Here is a 123-residue protein sequence, read N- to C-terminus: Small ribosomal subunit protein uS12cz/uS12cy/uS12cx/uS12w (123 aa).

Polar residues predominate over residues 1–13; it reads MPTSNQLLRNSRQ. The tract at residues 1–30 is disordered; the sequence is MPTSNQLLRNSRQPVRKTKKTPALRGCPQR. Basic residues predominate over residues 14 to 30; sequence PVRKTKKTPALRGCPQR.

It belongs to the universal ribosomal protein uS12 family. In terms of assembly, part of the 30S ribosomal subunit.

It is found in the plastid. Its subcellular location is the chloroplast. Its function is as follows. With S4 and S5 plays an important role in translational accuracy. Located at the interface of the 30S and 50S subunits. The protein is Small ribosomal subunit protein uS12cz/uS12cy/uS12cx/uS12w (rps12-A) of Pelargonium hortorum (Common geranium).